A 157-amino-acid polypeptide reads, in one-letter code: MRLEDIRPQPGSTRRRRRLGRGIAAGQGASCGKGMRGQKARKGGGPRPGFEGGQTPLYRRLPKLKHFPRYVRRPQYTLINLRALAKLPAGSEVSLESLMDLGIVTTNDGPLKILGDGEVGVPLTIRAAAITPSARAKVEAAGGRVELVGSQTASAGS.

Residues 1–56 (MRLEDIRPQPGSTRRRRRLGRGIAAGQGASCGKGMRGQKARKGGGPRPGFEGGQTP) are disordered. Over residues 23-35 (IAAGQGASCGKGM) the composition is skewed to gly residues.

The protein belongs to the universal ribosomal protein uL15 family. As to quaternary structure, part of the 50S ribosomal subunit.

In terms of biological role, binds to the 23S rRNA. The chain is Large ribosomal subunit protein uL15 from Synechococcus sp. (strain JA-3-3Ab) (Cyanobacteria bacterium Yellowstone A-Prime).